A 314-amino-acid polypeptide reads, in one-letter code: 4-diphosphocytidyl-2-C-methyl-D-erythritol kinase (314 aa).

Lys-11 is an active-site residue. 99–109 (PMAAGLAGGST) lines the ATP pocket. Residue Asp-141 is part of the active site.

Belongs to the GHMP kinase family. IspE subfamily.

It carries out the reaction 4-CDP-2-C-methyl-D-erythritol + ATP = 4-CDP-2-C-methyl-D-erythritol 2-phosphate + ADP + H(+). It participates in isoprenoid biosynthesis; isopentenyl diphosphate biosynthesis via DXP pathway; isopentenyl diphosphate from 1-deoxy-D-xylulose 5-phosphate: step 3/6. Catalyzes the phosphorylation of the position 2 hydroxy group of 4-diphosphocytidyl-2C-methyl-D-erythritol. The sequence is that of 4-diphosphocytidyl-2-C-methyl-D-erythritol kinase from Trichodesmium erythraeum (strain IMS101).